Consider the following 57-residue polypeptide: Amyloid-beta precursor protein (57 aa).

At 1-33 (SEVKMDAEFRHDSGYEVHHQKLVFFAEDVGSNK) the chain is on the extracellular side. Cu(2+) is bound by residues histidine 11, tyrosine 15, histidine 18, and histidine 19. Residues histidine 11, tyrosine 15, histidine 18, and histidine 19 each contribute to the Zn(2+) site. A helical transmembrane segment spans residues 34 to 57 (GAIIGLMVGGVVIATVIVITLVML).

It belongs to the APP family. Binds, via its C-terminus, to the PID domain of several cytoplasmic proteins, including APBB family members, the APBA family, MAPK8IP1, SHC1 and NUMB and DAB1. Binding to DAB1 inhibits its serine phosphorylation. Interacts (via NPXY motif) with DAB2 (via PID domain); the interaction is impaired by tyrosine phosphorylation of the NPXY motif. Also interacts with GPCR-like protein BPP, APPBP1, IB1, KNS2 (via its TPR domains), APPBP2 (via BaSS) and DDB1. In vitro, it binds MAPT via the MT-binding domains. Associates with microtubules in the presence of ATP and in a kinesin-dependent manner. Interacts, through a C-terminal domain, with GNAO1. Interacts with CPEB1, ANKS1B, TNFRSF21 and AGER. Interacts with ITM2B. Interacts with ITM2C. Interacts with IDE. Can form homodimers; dimerization is enhanced in the presence of Cu(2+) ions. Can form homodimers; this is promoted by heparin binding. Interacts with SORL1 (via N-terminal ectodomain); this interaction retains APP in the trans-Golgi network and reduces processing into soluble APP-alpha and amyloid-beta peptides. Interacts with PLD3. Interacts with VDAC1. Interacts with NSG1; could regulate APP processing. Amyloid-beta protein 42 interacts with FPR2. Interacts with LRRK2. Interacts (via cytoplasmic domain) with KIF5B. Interacts (via C-terminus) with APBB2/FE65L1 (via C-terminus). Interacts (via intracellular domain) with APBB3. Proteolytically processed under normal cellular conditions. Cleavage either by alpha-secretase, beta-secretase or theta-secretase leads to generation and extracellular release of soluble APP peptides, S-APP-alpha and S-APP-beta, and the retention of corresponding membrane-anchored C-terminal fragments, C80, C83 and C99. Subsequent processing of C80 and C83 by gamma-secretase yields P3 peptides. This is the major secretory pathway and is non-amyloidogenic. Alternatively, presenilin/nicastrin-mediated gamma-secretase processing of C99 releases the amyloid-beta proteins, amyloid-beta protein 40 and amyloid-beta protein 42, major components of amyloid plaques, and the cytotoxic C-terminal fragments, gamma-CTF(50), gamma-CTF(57) and gamma-CTF(59). PSEN1 cleavage is more efficient with C83 than with C99 as substrate (in vitro). Amyloid-beta protein 40 and Amyloid-beta protein 42 are cleaved by ACE. Many other minor amyloid-beta peptides, amyloid-beta 1-X peptides, are found in cerebral spinal fluid (CSF) including the amyloid-beta X-15 peptides, produced from the cleavage by alpha-secretase.

It is found in the cell membrane. The protein localises to the membrane. The protein resides in the perikaryon. Its subcellular location is the cell projection. It localises to the growth cone. It is found in the clathrin-coated pit. The protein localises to the early endosome. The protein resides in the cytoplasmic vesicle. Its subcellular location is the secreted. It localises to the cell surface. It is found in the nucleus. The protein localises to the cytoplasm. In terms of biological role, functions as a cell surface receptor and performs physiological functions on the surface of neurons relevant to neurite growth, neuronal adhesion and axonogenesis. Interaction between APP molecules on neighboring cells promotes synaptogenesis. Involved in cell mobility and transcription regulation through protein-protein interactions. Can promote transcription activation through binding to APBB1-KAT5 and inhibit Notch signaling through interaction with Numb. Couples to apoptosis-inducing pathways such as those mediated by G(o) and JIP. Inhibits G(o)-alpha ATPase activity. Acts as a kinesin I membrane receptor, mediating the axonal transport of beta-secretase and presenilin 1. By acting as a kinesin I membrane receptor, plays a role in axonal anterograde transport of cargo towards synapses in axons. May be involved in copper homeostasis/oxidative stress through copper ion reduction. In vitro, copper-metallated APP induces neuronal death directly or is potentiated through Cu(2+)-mediated low-density lipoprotein oxidation. Can regulate neurite outgrowth through binding to components of the extracellular matrix such as heparin and collagen I and IV. Induces a AGER-dependent pathway that involves activation of p38 MAPK, resulting in internalization of amyloid-beta peptide and mitochondrial dysfunction in cultured cortical neurons. Provides Cu(2+) ions for GPC1 which are required for release of nitric oxide (NO) and subsequent degradation of the heparan sulfate chains on GPC1. This chain is Amyloid-beta precursor protein (APP), found in Ursus maritimus (Polar bear).